A 415-amino-acid chain; its full sequence is von Willebrand factor A domain-containing protein 1 (415 aa).

An N-terminal signal peptide occupies residues 1-18 (MLFWTAFSMALSLRLALA). In terms of domain architecture, VWFA spans 34–209 (DLLFLLDSSA…IIARELRGSI (176 aa)). Residues serine 74, serine 80, and serine 93 each carry the phosphoserine modification. 2 consecutive Fibronectin type-III domains span residues 214-305 (QPQQ…LQEE) and 307-403 (GPER…TRAP). Asparagine 264 carries an N-linked (GlcNAc...) asparagine glycan. A disulfide bond links cysteine 369 and cysteine 393. Residues 391–415 (KACTASGARTRAPQSMRPEAGPREP) are disordered.

In terms of assembly, homodimer or homomultimer; disulfide-linked. Interacts with HSPG2. Post-translationally, N-glycosylated. In terms of tissue distribution, expressed at high levels in the chondrocytes. Detected in the vasculature of neural tissues, in basement membrane structures of the peripheral nervous system, in the apical ectodermal ridge of developing limb buds, and in skeletal and cardiac muscle (at protein level).

The protein resides in the secreted. It localises to the extracellular space. The protein localises to the extracellular matrix. Its subcellular location is the basement membrane. In terms of biological role, promotes matrix assembly. Involved in the organization of skeletal muscles and in the formation of neuromuscular junctions. The polypeptide is von Willebrand factor A domain-containing protein 1 (Vwa1) (Mus musculus (Mouse)).